Reading from the N-terminus, the 154-residue chain is Prefoldin subunit 2 (154 aa).

Residues 1–18 (MAENGGRAGKSSGSGTGK) show a composition bias toward gly residues. Disordered stretches follow at residues 1-20 (MAEN…GKGA) and 124-154 (IRLM…VLVS). Residues 124-139 (IRLMGEDEKPAAKENS) are compositionally biased toward basic and acidic residues. The span at 140–154 (EGAGAKASSAGVLVS) shows a compositional bias: low complexity.

It belongs to the prefoldin subunit beta family. Heterohexamer of two PFD-alpha type and four PFD-beta type subunits. Component of the PAQosome complex which is responsible for the biogenesis of several protein complexes and which consists of R2TP complex members RUVBL1, RUVBL2, RPAP3 and PIH1D1, URI complex members PFDN2, PFDN6, PDRG1, UXT and URI1 as well as ASDURF, POLR2E and DNAAF10/WDR92. Interacts with URI1; the interaction is phosphorylation-dependent and occurs in a growth-dependent manner.

The protein localises to the nucleus. It is found in the cytoplasm. The protein resides in the mitochondrion. In terms of biological role, binds specifically to cytosolic chaperonin (c-CPN) and transfers target proteins to it. Binds to nascent polypeptide chain and promotes folding in an environment in which there are many competing pathways for nonnative proteins. The polypeptide is Prefoldin subunit 2 (PFDN2) (Bos taurus (Bovine)).